Here is a 72-residue protein sequence, read N- to C-terminus: Nod factor export ATP-binding protein I (72 aa).

The protein belongs to the ABC transporter superfamily. Lipooligosaccharide exporter (TC 3.A.1.102) family. As to quaternary structure, the complex is composed of two ATP-binding proteins (NodI) and two transmembrane proteins (NodJ).

The protein localises to the cell inner membrane. Part of the ABC transporter complex NodIJ involved in the export of the nodulation factors (Nod factors), the bacterial signal molecules that induce symbiosis and subsequent nodulation induction. Nod factors are LCO (lipo-chitin oligosaccharide), a modified beta-1,4-linked N-acetylglucosamine oligosaccharide. This subunit is responsible for energy coupling to the transport system. The protein is Nod factor export ATP-binding protein I of Rhizobium leguminosarum bv. trifolii.